Reading from the N-terminus, the 480-residue chain is Siroheme synthase (480 aa).

A precorrin-2 dehydrogenase /sirohydrochlorin ferrochelatase region spans residues 1–203; that stretch reads MNYFPIFANL…QQTAQAEQEL (203 aa). Residues 22 to 23 and 43 to 44 contribute to the NAD(+) site; these read SV and NQ. Residue Ser128 is modified to Phosphoserine. The segment at 214–480 is uroporphyrinogen-III C-methyltransferase; that stretch reads GFVSLVGAGP…GGLNAGQRAA (267 aa). Pro223 lines the S-adenosyl-L-methionine pocket. Asp246 acts as the Proton acceptor in catalysis. Lys268 serves as the catalytic Proton donor. Residues 299 to 301, Val304, 329 to 330, Met381, and Gly410 contribute to the S-adenosyl-L-methionine site; these read GGD and TA.

In the N-terminal section; belongs to the precorrin-2 dehydrogenase / sirohydrochlorin ferrochelatase family. The protein in the C-terminal section; belongs to the precorrin methyltransferase family.

It catalyses the reaction uroporphyrinogen III + 2 S-adenosyl-L-methionine = precorrin-2 + 2 S-adenosyl-L-homocysteine + H(+). The enzyme catalyses precorrin-2 + NAD(+) = sirohydrochlorin + NADH + 2 H(+). The catalysed reaction is siroheme + 2 H(+) = sirohydrochlorin + Fe(2+). The protein operates within cofactor biosynthesis; adenosylcobalamin biosynthesis; precorrin-2 from uroporphyrinogen III: step 1/1. It functions in the pathway cofactor biosynthesis; adenosylcobalamin biosynthesis; sirohydrochlorin from precorrin-2: step 1/1. It participates in porphyrin-containing compound metabolism; siroheme biosynthesis; precorrin-2 from uroporphyrinogen III: step 1/1. Its pathway is porphyrin-containing compound metabolism; siroheme biosynthesis; siroheme from sirohydrochlorin: step 1/1. The protein operates within porphyrin-containing compound metabolism; siroheme biosynthesis; sirohydrochlorin from precorrin-2: step 1/1. In terms of biological role, multifunctional enzyme that catalyzes the SAM-dependent methylations of uroporphyrinogen III at position C-2 and C-7 to form precorrin-2 via precorrin-1. Then it catalyzes the NAD-dependent ring dehydrogenation of precorrin-2 to yield sirohydrochlorin. Finally, it catalyzes the ferrochelation of sirohydrochlorin to yield siroheme. This is Siroheme synthase from Neisseria meningitidis serogroup C (strain 053442).